Reading from the N-terminus, the 491-residue chain is UDP-N-acetylmuramate--L-alanine ligase (491 aa).

126–132 (GTHGKTT) is a binding site for ATP.

This sequence belongs to the MurCDEF family.

The protein localises to the cytoplasm. The catalysed reaction is UDP-N-acetyl-alpha-D-muramate + L-alanine + ATP = UDP-N-acetyl-alpha-D-muramoyl-L-alanine + ADP + phosphate + H(+). The protein operates within cell wall biogenesis; peptidoglycan biosynthesis. In terms of biological role, cell wall formation. This is UDP-N-acetylmuramate--L-alanine ligase from Escherichia coli (strain SE11).